The sequence spans 110 residues: tRNA-binding protein YgjH (110 aa).

In terms of domain architecture, tRNA-binding spans 8 to 110 (DFARLEMRVG…RMMPAGVRVV (103 aa)).

As to quaternary structure, homodimer.

The polypeptide is tRNA-binding protein YgjH (ygjH) (Escherichia coli (strain K12)).